The primary structure comprises 167 residues: MADDATRKAVSEIPLLKTNSGPRDKELWVQRLREEYLAPIKYVENNKAADNDWFRLESNKEGTRWFGKCWYIHDLLKYEFDIEFDIPVTYPTTAPEVAIPELDGKTAKMYRGGKICLTDHFKPLWARNVPKFGLAHLMALGLGPWLAVEIPDLISKGLITHREQQGS.

The active-site Glycyl thioester intermediate is C116.

It belongs to the ubiquitin-conjugating enzyme family. UFC1 subfamily. Interacts with UBA5 (via C-terminus). Interacts with UFL1. Interacts with UFM1.

E2-like enzyme which specifically catalyzes the second step in ufmylation. Accepts the ubiquitin-like modifier UFM1 from the E1 enzyme UBA5 and forms an intermediate with UFM1 via a thioester linkage. Ufmylation is involved in various processes, such as ribosome recycling, response to DNA damage, interferon response or reticulophagy (also called ER-phagy). The chain is Ubiquitin-fold modifier-conjugating enzyme 1 from Esox lucius (Northern pike).